Reading from the N-terminus, the 530-residue chain is Autoinducer-2 kinase (530 aa).

The protein belongs to the FGGY kinase family.

The protein localises to the cytoplasm. The catalysed reaction is (S)-4,5-dihydroxypentane-2,3-dione + ATP = (2S)-2-hydroxy-3,4-dioxopentyl phosphate + ADP + H(+). Catalyzes the phosphorylation of autoinducer-2 (AI-2) to phospho-AI-2, which subsequently inactivates the transcriptional regulator LsrR and leads to the transcription of the lsr operon. Phosphorylates the ring-open form of (S)-4,5-dihydroxypentane-2,3-dione (DPD), which is the precursor to all AI-2 signaling molecules, at the C5 position. The polypeptide is Autoinducer-2 kinase (Salmonella typhimurium (strain LT2 / SGSC1412 / ATCC 700720)).